The chain runs to 629 residues: Ras GTPase-activating protein gap-1 (629 aa).

The Ras-GAP domain maps to 183–398 (DRIRPVLSSL…SVMASFLDNI (216 aa)). One can recognise a PH domain in the interval 411–507 (TVFKFGNLQQ…WLNAIERQRN (97 aa)).

It is found in the cytoplasm. Its function is as follows. GTPase-activating protein, which inhibits the vulval induction by acting as a negative regulator for the member of the Ras family let-60. Probably decreases the signaling activity of Ras by stimulating its intrinsic GTPase activity, thereby lowering the levels of GTP-bound, active Ras. The protein is Ras GTPase-activating protein gap-1 (gap-1) of Caenorhabditis elegans.